The primary structure comprises 513 residues: MQLNSTEISELIKQRIAQFNVVSEAHNEGTIVSVSDGIIRVHGLADVMQGEMIALPGNRYAIALNLERDSVGAVVMGPYADLAEGMKVKCTGRILEVPVGRGLLGRVVNTLGEPVDGKGPVENDGFSAVEAIAPGVIERQSVDEPVQTGYKSVDAMIPIGRGQRELIIGDRQTGKTALAIDAIINQRDSGIKCVYVAIGQKASTVANVVRKLEEHGALANTIVVVATASESAALQYLAPYSGCAMGEYFRDRGEDALIIYDDLSKQAVAYRQISLLLRRPPGREAYPGDVFYLHSRLLERAARVNADYVEAFTKGEVKGKTGSLTALPIIETQAGDVSAFVPTNVISITDGQIFLESSLFNAGIRPAVNPGISVSRVGGAAQTKIMKKLSGGIRTALAQYRELAAFSQFASDLDDATRKQLSHGQKVTELLKQKQYAPMSVAQQSLVLFAAERGYLGDIELAKVGSFEAALLAFADREHAELLQQINQTGAYNDEIEAKLKGILDTFKATQSW.

Residue G169–T176 coordinates ATP.

It belongs to the ATPase alpha/beta chains family. In terms of assembly, F-type ATPases have 2 components, CF(1) - the catalytic core - and CF(0) - the membrane proton channel. CF(1) has five subunits: alpha(3), beta(3), gamma(1), delta(1), epsilon(1). CF(0) has three main subunits: a(1), b(2) and c(9-12). The alpha and beta chains form an alternating ring which encloses part of the gamma chain. CF(1) is attached to CF(0) by a central stalk formed by the gamma and epsilon chains, while a peripheral stalk is formed by the delta and b chains.

It localises to the cell inner membrane. It carries out the reaction ATP + H2O + 4 H(+)(in) = ADP + phosphate + 5 H(+)(out). In terms of biological role, produces ATP from ADP in the presence of a proton gradient across the membrane. The alpha chain is a regulatory subunit. The protein is ATP synthase subunit alpha of Yersinia enterocolitica serotype O:8 / biotype 1B (strain NCTC 13174 / 8081).